Here is a 353-residue protein sequence, read N- to C-terminus: GDP-mannose transporter (353 aa).

Residues 1–31 (MGLLLSYLFGYIFYSVNKKFHIMEKFGASNS) are Cytoplasmic-facing. Residues 32-52 (IVNNGPVSIFAYCASSILMTV) traverse the membrane as a helical segment. At 53–66 (TNKFVVGAYEFNLN) the chain is on the lumenal side. A helical membrane pass occupies residues 67 to 87 (FFLLAVQAAVCLVTIATLKGL). Over 88–102 (GIITYRQFNKDEAKK) the chain is Cytoplasmic. Residues 103 to 122 (WFPIAFLLVLMIYTSSKALQ) traverse the membrane as a helical segment. The Lumenal segment spans residues 123 to 125 (YLS). A helical membrane pass occupies residues 126–148 (IPVYTIFKNLTIILIAYGEVIWF). Over 149-154 (GGKVTT) the chain is Cytoplasmic. A helical membrane pass occupies residues 155-172 (MALGSFILMVLSSVIAYY). The Lumenal portion of the chain corresponds to 173-187 (GDTAETGEKTAEMHL). The helical transmembrane segment at 188 to 208 (LYLGYAWMFTNCFSSAAFVLI) threads the bilayer. Residues 209–227 (MRKRIKLTNFKDFDTMYYN) lie on the Cytoplasmic side of the membrane. A helical membrane pass occupies residues 228-248 (NLLSLPLLLVFSFLFEDWSSV). The Lumenal segment spans residues 249–262 (NLNKNFPPDNRNTT). N260 is a glycosylation site (N-linked (GlcNAc...) asparagine). The chain crosses the membrane as a helical span at residues 263-283 (IFVMILSGASSVGISYCSAWC). Residues 284-290 (VRVTSST) are Cytoplasmic-facing. A helical transmembrane segment spans residues 291–313 (TYSMVGALNKLPIALSGLVFFNA). Residues 314 to 316 (AVN) lie on the Lumenal side of the membrane. Residues 317–336 (FWSVSSIFVGFLAGVFYAVA) traverse the membrane as a helical segment. The Cytoplasmic segment spans residues 337–353 (KQKQQKENAQQLPVANK).

It belongs to the TPT transporter family. SLC35D subfamily. As to quaternary structure, homooligomer.

Its subcellular location is the golgi apparatus membrane. The protein localises to the cytoplasmic vesicle membrane. The protein resides in the endoplasmic reticulum membrane. In terms of biological role, involved in the import of GDP-mannose from the cytoplasm into the Golgi lumen. The polypeptide is GDP-mannose transporter (VRG4) (Meyerozyma guilliermondii (strain ATCC 6260 / CBS 566 / DSM 6381 / JCM 1539 / NBRC 10279 / NRRL Y-324) (Yeast)).